A 184-amino-acid polypeptide reads, in one-letter code: Photosystem I assembly protein Ycf4 (184 aa).

Transmembrane regions (helical) follow at residues 22 to 42 (FCWAVILFLGSLGFLLVGTSS) and 57 to 77 (IVFFPQGIVMSFYGIAGLFIS).

It belongs to the Ycf4 family.

The protein resides in the plastid. Its subcellular location is the chloroplast thylakoid membrane. Functionally, seems to be required for the assembly of the photosystem I complex. This chain is Photosystem I assembly protein Ycf4, found in Lactuca sativa (Garden lettuce).